A 113-amino-acid polypeptide reads, in one-letter code: Probable 4-amino-4-deoxy-L-arabinose-phosphoundecaprenol flippase subunit ArnE (113 aa).

Helical transmembrane passes span 40 to 60 (FGWL…WLLV), 64 to 84 (LPLG…TLLA), and 92 to 112 (VDRH…LMQG).

The protein belongs to the ArnE family. As to quaternary structure, heterodimer of ArnE and ArnF.

The protein localises to the cell inner membrane. It functions in the pathway bacterial outer membrane biogenesis; lipopolysaccharide biosynthesis. Translocates 4-amino-4-deoxy-L-arabinose-phosphoundecaprenol (alpha-L-Ara4N-phosphoundecaprenol) from the cytoplasmic to the periplasmic side of the inner membrane. The protein is Probable 4-amino-4-deoxy-L-arabinose-phosphoundecaprenol flippase subunit ArnE of Pectobacterium atrosepticum (strain SCRI 1043 / ATCC BAA-672) (Erwinia carotovora subsp. atroseptica).